The sequence spans 216 residues: Glutathione S-transferase 1, isoform B (216 aa).

The region spanning 1–80 (MDFYYLPGSA…YLVEKYGKPC (80 aa)) is the GST N-terminal domain. Residues S9, 50 to 52 (HCV), and 64 to 66 (ESR) each bind glutathione. Positions 89–210 (DPQKRAIVNQ…RSWAEAARPF (122 aa)) constitute a GST C-terminal domain.

Belongs to the GST superfamily. Theta family. As to quaternary structure, homodimer.

It catalyses the reaction RX + glutathione = an S-substituted glutathione + a halide anion + H(+). In terms of biological role, conjugation of reduced glutathione to a wide number of exogenous and endogenous hydrophobic electrophiles. The sequence is that of Glutathione S-transferase 1, isoform B from Anopheles gambiae (African malaria mosquito).